The chain runs to 257 residues: MRYALGVEYDGSEFQGWQQLGEHGGPSVQASLQAALSSVADAPVQVVCAGRTDAGVHGECQVVHFDSDARREPRGWMLGTTARLPPSIAVRWCVPAADDFHARFSARARRYRYRLLNRQIRPALYRQTLSWERRPLDADAMHAAAQALLGENDFSAFRSVQCQALHARRHLQAIHVQRIGEVVEVQVQANAFLHHMVRNIVGSLILVGTGEQPADWIATLLAGRDRTVAGPTAPPQGLVFIGPLYPAEWHLPAEVTQ.

The active-site Nucleophile is aspartate 53. Residue tyrosine 111 coordinates substrate.

The protein belongs to the tRNA pseudouridine synthase TruA family. As to quaternary structure, homodimer.

It carries out the reaction uridine(38/39/40) in tRNA = pseudouridine(38/39/40) in tRNA. In terms of biological role, formation of pseudouridine at positions 38, 39 and 40 in the anticodon stem and loop of transfer RNAs. The polypeptide is tRNA pseudouridine synthase A (Xanthomonas euvesicatoria pv. vesicatoria (strain 85-10) (Xanthomonas campestris pv. vesicatoria)).